The primary structure comprises 229 residues: MAKKSKQLRAALEKIDSTKAYSVEEAVALAKETNFAKFDATVEVAYNLNIDVKKADQQIRGAMVLPNGTGKTSRVLVFARGAKAEEAKAAGADFVGEDDLVAKINDGWLDFDVVIATPDMMALVGRLGRVLGPRNLMPNPKTGTVTMDVAKAVEESKGGKITYRADRAGNVQAIIGKVSFEAEKLVENFKAFNETIQKVKPATAKGTYVTNLTITTTQGVGIKVDVNSL.

It belongs to the universal ribosomal protein uL1 family. In terms of assembly, part of the 50S ribosomal subunit.

Functionally, binds directly to 23S rRNA. The L1 stalk is quite mobile in the ribosome, and is involved in E site tRNA release. Its function is as follows. Protein L1 is also a translational repressor protein, it controls the translation of the L11 operon by binding to its mRNA. This is Large ribosomal subunit protein uL1 from Streptococcus pneumoniae (strain ATCC 700669 / Spain 23F-1).